Here is a 367-residue protein sequence, read N- to C-terminus: DNA-directed RNA polymerase II subunit GRINL1A (367 aa).

Residues 15-40 are a coiled coil; the sequence is DLERRSLAELREMLKRQERLLRNEKF. The important for transcription repressor activity stretch occupies residues 29 to 68; sequence KRQERLLRNEKFICKLPDKGKKIFDSFAKLKAAIAECEEV. 3 stretches are compositionally biased toward polar residues: residues 117–131, 176–185, and 205–225; these read SVDN…QNQG, RVSSQAEDTS, and GEQQ…SGTQ. Disordered stretches follow at residues 117 to 185, 203 to 225, and 254 to 281; these read SVDN…EDTS, DQGE…SGTQ, and PFRQ…RRDK. The segment at 226–297 is interaction with Pol II; sequence KKPHYMEVLE…TAARLLPLHH (72 aa). Ser-269 carries the phosphoserine modification. The segment at 298–313 is important for transcription repressor activity; that stretch reads MPTQLLSIEESLALQK. Residues 300 to 329 are a coiled coil; sequence TQLLSIEESLALQKQRKQKYEEMQAKLAAQ. Residues 314–339 are interaction with Pol II; that stretch reads QRKQKYEEMQAKLAAQKLAERLNIKM. The disordered stretch occupies residues 335–367; that stretch reads LNIKMRSYNPEGESSGRYREVRDEDDDWSSDEF. Positions 357–367 are enriched in acidic residues; sequence DEDDDWSSDEF.

The protein belongs to the GRINL1 family. In terms of assembly, component of the Pol II(G) complex, which contains the RNA polymerase II (Pol II) core complex subunits and POLR2M isoform 1. Pol II(G) appears to be an abundant form of Pol II. In terms of processing, dephosphorylated at Ser-269 by the PNUTS-PP1 complex, promoting RNA polymerase II transcription pause-release.

It is found in the nucleus. Its function is as follows. Appears to be a stable component of the Pol II(G) complex form of RNA polymerase II (Pol II). Pol II synthesizes mRNA precursors and many functional non-coding RNAs and is the central component of the basal RNA polymerase II transcription machinery. May play a role in the Mediator complex-dependent regulation of transcription activation. Acts as a negative regulator of transcriptional activation; this repression is relieved by the Mediator complex, which restores Pol II(G) activator-dependent transcription to a level equivalent to that of Pol II. The chain is DNA-directed RNA polymerase II subunit GRINL1A (POLR2M) from Pongo abelii (Sumatran orangutan).